The primary structure comprises 478 residues: Alcohol dehydrogenase (quinone), cytochrome c subunit (478 aa).

Residues 1–36 (MLNALTRDRLVSEMKQGWKLAAAIGLMAVSFGAAHA) form the signal peptide. The residue at position 37 (Gln37) is a Pyrrolidone carboxylic acid. Cytochrome c domains are found at residues 42-145 (ALIK…MHGV), 189-304 (PEVA…KSMP), and 327-417 (GQGN…RKGW). Residues Cys56, Cys59, His60, Cys204, Cys207, His208, Cys340, Cys343, and His344 each coordinate heme c.

In terms of assembly, the alcohol dehydrogenase multicomponent enzyme system is composed of a dehydrogenase subunit I (AdhA), a cytochrome c subunit II (AdhB) and a subunit III (AdhS). The cofactor is heme c.

The protein resides in the cell membrane. It catalyses the reaction ethanol + a ubiquinone = a ubiquinol + acetaldehyde. 2,6-dichloro-4-dicyanovinylphenol (PC16) and antimycin A inhibit ubiquinol oxidation activity more selectively than the ubiquinone reductase activity. Functionally, cytochrome c component of the alcohol dehydrogenase multicomponent enzyme system which is involved in the production of acetic acid and in the ethanol oxidase respiratory chain. Quinohemoprotein alcohol dehydrogenase (ADH) catalyzes the oxidation of ethanol to acetaldehyde by transferring electrons to the ubiquinone embedded in the membrane phospholipids. The electrons transfer from ethanol to membranous ubiquinone occurs from pyrroloquinoline quinone (PQQ) to one heme c in subunit I (AdhA), and finally to two heme c in subunit II (AdhB). Besides ubiquinone reduction, ADH also has a ubiquinol (QH2) oxidation reaction which mediates electron transfer from ubiquinol to the non-energy generating bypass oxidase system. The electrons transfer occurs from ubiquinol (QH2) to the additional heme c within subunit II (AdhB). Also able to use quinone analogs such as 2,3-dimethoxy-5-methyl-6-n-decyl-1,4-benzoquinone (DB) and 2,3-dimethoxy-5-methyl-6-n-pentyl-1,4-benzoquinone (PB). The protein is Alcohol dehydrogenase (quinone), cytochrome c subunit of Gluconobacter oxydans (strain 621H) (Gluconobacter suboxydans).